A 198-amino-acid polypeptide reads, in one-letter code: Mitrocomin (198 aa).

Residues 1 to 8 (MSMGSRYA) constitute a propeptide that is removed on maturation. EF-hand domains lie at 19–54 (KWIA…IICK), 118–147 (DALF…AGIQ), and 148–183 (QSRG…FWYS). Ca(2+) contacts are provided by Asp32, Asn34, Asn36, Gln38, Glu43, Asp125, Asp127, Asn129, Ser131, Glu136, Asp161, Asp163, Asp165, Lys167, and Glu172.

It belongs to the aequorin family.

Functionally, ca(2+)-dependent bioluminescence photoprotein. Displays an emission peak at 470 nm (blue light). Trace amounts of calcium ion trigger the intramolecular oxidation of the chromophore, coelenterazine into coelenteramide and CO(2) with the concomitant emission of light. This chain is Mitrocomin (MI17), found in Mitrocoma cellularia (Cross jellyfish).